Here is a 667-residue protein sequence, read N- to C-terminus: DNA ligase (667 aa).

NAD(+) contacts are provided by residues 34–38 (DAEYD), 83–84 (SL), and E113. Residue K115 is the N6-AMP-lysine intermediate of the active site. 4 residues coordinate NAD(+): R136, E170, K286, and K310. Residues C404, C407, C422, and C427 each coordinate Zn(2+). The BRCT domain occupies 589-667 (ATDSVLSGKT…EQQLEDVVGK (79 aa)).

The protein belongs to the NAD-dependent DNA ligase family. LigA subfamily. It depends on Mg(2+) as a cofactor. Mn(2+) serves as cofactor.

It carries out the reaction NAD(+) + (deoxyribonucleotide)n-3'-hydroxyl + 5'-phospho-(deoxyribonucleotide)m = (deoxyribonucleotide)n+m + AMP + beta-nicotinamide D-nucleotide.. In terms of biological role, DNA ligase that catalyzes the formation of phosphodiester linkages between 5'-phosphoryl and 3'-hydroxyl groups in double-stranded DNA using NAD as a coenzyme and as the energy source for the reaction. It is essential for DNA replication and repair of damaged DNA. This is DNA ligase from Oceanobacillus iheyensis (strain DSM 14371 / CIP 107618 / JCM 11309 / KCTC 3954 / HTE831).